Consider the following 230-residue polypeptide: Orotidine 5'-phosphate decarboxylase (230 aa).

Substrate-binding positions include Asp-11, Lys-34, 61 to 70 (DLKLHDIPNT), Thr-117, Arg-179, Gln-188, Gly-208, and Arg-209. The active-site Proton donor is the Lys-63.

It belongs to the OMP decarboxylase family. Type 1 subfamily. As to quaternary structure, homodimer.

The catalysed reaction is orotidine 5'-phosphate + H(+) = UMP + CO2. It participates in pyrimidine metabolism; UMP biosynthesis via de novo pathway; UMP from orotate: step 2/2. Its function is as follows. Catalyzes the decarboxylation of orotidine 5'-monophosphate (OMP) to uridine 5'-monophosphate (UMP). The protein is Orotidine 5'-phosphate decarboxylase of Streptococcus pyogenes serotype M49 (strain NZ131).